We begin with the raw amino-acid sequence, 237 residues long: Pyridoxine 5'-phosphate synthase (237 aa).

3-amino-2-oxopropyl phosphate contacts are provided by Asn-7 and Arg-18. His-43 acts as the Proton acceptor in catalysis. Residues Arg-45 and His-50 each coordinate 1-deoxy-D-xylulose 5-phosphate. The active-site Proton acceptor is the Glu-70. 1-deoxy-D-xylulose 5-phosphate is bound at residue Thr-100. Residue His-190 is the Proton donor of the active site. Residues Asp-191 and 213–214 (GH) each bind 3-amino-2-oxopropyl phosphate.

Belongs to the PNP synthase family. Homooctamer; tetramer of dimers.

The protein resides in the cytoplasm. It carries out the reaction 3-amino-2-oxopropyl phosphate + 1-deoxy-D-xylulose 5-phosphate = pyridoxine 5'-phosphate + phosphate + 2 H2O + H(+). The protein operates within cofactor biosynthesis; pyridoxine 5'-phosphate biosynthesis; pyridoxine 5'-phosphate from D-erythrose 4-phosphate: step 5/5. Its function is as follows. Catalyzes the complicated ring closure reaction between the two acyclic compounds 1-deoxy-D-xylulose-5-phosphate (DXP) and 3-amino-2-oxopropyl phosphate (1-amino-acetone-3-phosphate or AAP) to form pyridoxine 5'-phosphate (PNP) and inorganic phosphate. The chain is Pyridoxine 5'-phosphate synthase from Bacteroides fragilis (strain ATCC 25285 / DSM 2151 / CCUG 4856 / JCM 11019 / LMG 10263 / NCTC 9343 / Onslow / VPI 2553 / EN-2).